A 226-amino-acid chain; its full sequence is ATP-dependent dethiobiotin synthetase BioD (226 aa).

ATP is bound at residue 13–18 (DVGKTV). T17 lines the Mg(2+) pocket. The active site involves K38. ATP is bound by residues D55, 116–119 (EGAG), and 176–177 (NR). Residues D55 and E116 each contribute to the Mg(2+) site.

The protein belongs to the dethiobiotin synthetase family. Homodimer. The cofactor is Mg(2+).

It is found in the cytoplasm. The enzyme catalyses (7R,8S)-7,8-diammoniononanoate + CO2 + ATP = (4R,5S)-dethiobiotin + ADP + phosphate + 3 H(+). The protein operates within cofactor biosynthesis; biotin biosynthesis; biotin from 7,8-diaminononanoate: step 1/2. In terms of biological role, catalyzes a mechanistically unusual reaction, the ATP-dependent insertion of CO2 between the N7 and N8 nitrogen atoms of 7,8-diaminopelargonic acid (DAPA, also called 7,8-diammoniononanoate) to form a ureido ring. In Aliivibrio fischeri (strain MJ11) (Vibrio fischeri), this protein is ATP-dependent dethiobiotin synthetase BioD.